A 118-amino-acid chain; its full sequence is Small ribosomal subunit protein uS13 (118 aa).

The interval 91-118 is disordered; sequence HRRSLPLRGQRTKNNARTRKGPKKPIKR.

It belongs to the universal ribosomal protein uS13 family. Part of the 30S ribosomal subunit. Forms a loose heterodimer with protein S19. Forms two bridges to the 50S subunit in the 70S ribosome.

Its function is as follows. Located at the top of the head of the 30S subunit, it contacts several helices of the 16S rRNA. In the 70S ribosome it contacts the 23S rRNA (bridge B1a) and protein L5 of the 50S subunit (bridge B1b), connecting the 2 subunits; these bridges are implicated in subunit movement. Contacts the tRNAs in the A and P-sites. The chain is Small ribosomal subunit protein uS13 from Hydrogenovibrio crunogenus (strain DSM 25203 / XCL-2) (Thiomicrospira crunogena).